Here is a 521-residue protein sequence, read N- to C-terminus: Bacillolysin (521 aa).

An N-terminal signal peptide occupies residues Met-1–Ala-27. Positions Ala-28 to His-221 are cleaved as a propeptide — activation peptide. Asp-360 lines the Ca(2+) pocket. His-364 is a Zn(2+) binding site. Residue Glu-365 is part of the active site. His-368 and Glu-388 together coordinate Zn(2+). Ca(2+) is bound by residues Asp-399, Asp-402, Asp-404, and Glu-407. His-449 functions as the Proton donor in the catalytic mechanism.

It belongs to the peptidase M4 family. It depends on Ca(2+) as a cofactor. Zn(2+) is required as a cofactor.

Its subcellular location is the secreted. It carries out the reaction Similar, but not identical, to that of thermolysin.. In terms of biological role, extracellular zinc metalloprotease. The polypeptide is Bacillolysin (nprE) (Bacillus subtilis subsp. amylosacchariticus).